A 122-amino-acid polypeptide reads, in one-letter code: Anti-sigma-F factor antagonist RsfB (122 aa).

In terms of domain architecture, STAS spans 7-115 (ITVTVADHNG…STLHDALTGV (109 aa)). A Phosphoserine modification is found at Ser61.

Belongs to the anti-sigma-factor antagonist family. Interacts with anti-sigma-F factor RsbW (UsfX). Its phosphorylation may prevent this interaction. Post-translationally, putative phosphorylation on Ser-61 may prevent interaction with RsbW.

Its function is as follows. Positive regulator of sigma-F (SigF) activity. Binds to anti-sigma-F factor RsbW (UsfX) preventing its binding to SigF, thus activating transcription. The chain is Anti-sigma-F factor antagonist RsfB (rsfB) from Mycobacterium tuberculosis (strain CDC 1551 / Oshkosh).